A 185-amino-acid polypeptide reads, in one-letter code: Ribosome maturation factor RimM (185 aa).

Positions 106-185 constitute a PRC barrel domain; sequence TGDYYWKDLI…TIEVDWDPGF (80 aa).

The protein belongs to the RimM family. In terms of assembly, binds ribosomal protein uS19.

It is found in the cytoplasm. An accessory protein needed during the final step in the assembly of 30S ribosomal subunit, possibly for assembly of the head region. Essential for efficient processing of 16S rRNA. May be needed both before and after RbfA during the maturation of 16S rRNA. It has affinity for free ribosomal 30S subunits but not for 70S ribosomes. This Photorhabdus laumondii subsp. laumondii (strain DSM 15139 / CIP 105565 / TT01) (Photorhabdus luminescens subsp. laumondii) protein is Ribosome maturation factor RimM.